The primary structure comprises 428 residues: Probable G-protein coupled receptor (428 aa).

Over 1-46 (MMADKTSPMITSDHSISNFSTGLFGPHPTVPPDVGVVTSSQSQMKD) the chain is Extracellular. A glycan (N-linked (GlcNAc...) asparagine) is linked at N18. Residues 47-67 (LFGLFCMVTLNLIALLANTGV) traverse the membrane as a helical segment. At 68–93 (MVAIARAPHLKKFAFVCHLCAVDVLC) the chain is on the cytoplasmic side. The helical transmembrane segment at 94–114 (AILLMPLGIISSSPFFGTVVF) threads the bilayer. Topologically, residues 115–120 (TILECQ) are extracellular. The helical transmembrane segment at 121-141 (VYIFLNVFLIWLSILTITAIS) threads the bilayer. The Cytoplasmic segment spans residues 142–162 (VERYFYIVHPMRYEVKMTINL). A helical membrane pass occupies residues 163–183 (VIGVMLLIWFKSLLLALVTLF). The Extracellular portion of the chain corresponds to 184–210 (GWPPYGHQSSIAASHCSLHASHSRLRG). A helical membrane pass occupies residues 211–231 (VFAVLFCVICFLAPVVVIFSV). The Cytoplasmic portion of the chain corresponds to 232–293 (YSAVYKVARS…PERAFSGGKA (62 aa)). A helical transmembrane segment spans residues 294–314 (ALTLAFIVGQFLVCWLPFFIF). Residues 315 to 428 (HLQMSLTGSM…IPGQIPEEQA (114 aa)) lie on the Extracellular side of the membrane. Positions 398–414 (SETHPSFANSNPRNMEN) are enriched in polar residues. Positions 398-428 (SETHPSFANSNPRNMENQAHKIPGQIPEEQA) are disordered.

Belongs to the G-protein coupled receptor 1 family.

The protein resides in the cell membrane. The sequence is that of Probable G-protein coupled receptor from Oryzias latipes (Japanese rice fish).